The chain runs to 196 residues: Large ribosomal subunit protein bL25 (196 aa).

It belongs to the bacterial ribosomal protein bL25 family. CTC subfamily. Part of the 50S ribosomal subunit; part of the 5S rRNA/L5/L18/L25 subcomplex. Contacts the 5S rRNA. Binds to the 5S rRNA independently of L5 and L18.

Its function is as follows. This is one of the proteins that binds to the 5S RNA in the ribosome where it forms part of the central protuberance. The sequence is that of Large ribosomal subunit protein bL25 from Treponema pallidum subsp. pallidum (strain SS14).